An 84-amino-acid chain; its full sequence is Beta-defensin 119 (84 aa).

An N-terminal signal peptide occupies residues 1–21 (MKFLFLFLAILLATEVPVISG). 3 disulfides stabilise this stretch: C28/C55, C35/C49, and C39/C56.

This sequence belongs to the beta-defensin family. As to expression, abundant expression in the male reproductive tract only. Expressed abundantly in testis, while expression in epididymis decreased gradually from caput to cauda.

Its subcellular location is the secreted. In terms of biological role, has antibacterial activity. The chain is Beta-defensin 119 (DEFB119) from Macaca mulatta (Rhesus macaque).